Consider the following 336-residue polypeptide: Eukaryotic translation initiation factor 3 subunit I (336 aa).

WD repeat units follow at residues 8 to 47 (GHERSLTQIKFNRDGDLLFSVSKDKIVCAWWTANGERLGT), 50 to 91 (GHLG…KVWE), 146 to 185 (CNESKATVAGWSYLGKYIIAGHEDGSVSQYDAKTGDQLEN), 190 to 229 (EFDHQINDIQFSADRTYFITASKDKSAKLISSRNLAILKT), and 287 to 326 (GHFGPLNTVGVHPNGTAYASGGEDGYVRVHHFDKPYFDFM).

This sequence belongs to the eIF-3 subunit I family. Component of the eukaryotic translation initiation factor 3 (eIF-3) complex.

Its subcellular location is the cytoplasm. Its function is as follows. Component of the eukaryotic translation initiation factor 3 (eIF-3) complex, which is involved in protein synthesis of a specialized repertoire of mRNAs and, together with other initiation factors, stimulates binding of mRNA and methionyl-tRNAi to the 40S ribosome. The eIF-3 complex specifically targets and initiates translation of a subset of mRNAs involved in cell proliferation. This is Eukaryotic translation initiation factor 3 subunit I (tif34) from Aspergillus terreus (strain NIH 2624 / FGSC A1156).